The chain runs to 226 residues: Protein TRI1 (226 aa).

The region spanning 1–56 (MADINKYIPMVDAILSVSNPDEISPKRVRKALQILYSVNLDSQRKLINELILERFG) is the DEK-C domain. Residues 83–118 (QKEEERPLRSTRKRKGKSESKSKRKKKKNDSPDSNS) are disordered. A compositionally biased stretch (basic residues) spans 91–110 (RSTRKRKGKSESKSKRKKKK). A Phosphoserine modification is found at Ser-113. The region spanning 119–195 (ISVRKVLLSA…NKLLTKHLFN (77 aa)) is the SWIB/MDM2 domain. Residues 200–218 (VKHEEEQKQTPEKEIKLEN) show a composition bias toward basic and acidic residues. Residues 200–226 (VKHEEEQKQTPEKEIKLENESLPNLSG) are disordered. Residues Lys-201 and Lys-215 each participate in a glycyl lysine isopeptide (Lys-Gly) (interchain with G-Cter in SUMO) cross-link. The residue at position 225 (Ser-225) is a Phosphoserine.

The protein resides in the cytoplasm. It is found in the nucleus. The protein localises to the nucleolus. May be involved in transcription regulation. This Saccharomyces cerevisiae (strain ATCC 204508 / S288c) (Baker's yeast) protein is Protein TRI1 (TRI1).